The primary structure comprises 65 residues: MEGSKRRHDSRRLQQEQEQPRPRTPPSYEEIAKYGHSFNVKRFTNKEMCLKNDYPRIISYNPPPK.

A compositionally biased stretch (basic residues) spans 1-10; sequence MEGSKRRHDS. The disordered stretch occupies residues 1-29; the sequence is MEGSKRRHDSRRLQQEQEQPRPRTPPSYE. The span at 11–21 shows a compositional bias: basic and acidic residues; the sequence is RRLQQEQEQPR.

The protein belongs to the orthopoxvirus OPG052 family.

The sequence is that of Protein OPG052 (OPG052) from Homo sapiens (Human).